The following is a 239-amino-acid chain: Sugar fermentation stimulation protein homolog (239 aa).

The protein belongs to the SfsA family.

The sequence is that of Sugar fermentation stimulation protein homolog from Mannheimia succiniciproducens (strain KCTC 0769BP / MBEL55E).